Here is a 383-residue protein sequence, read N- to C-terminus: Protein delta homolog 1 (383 aa).

The N-terminal stretch at 1–23 (MTATEALLRVLLLLLAFGHSTYG) is a signal peptide. EGF-like domains follow at residues 24–55 (AECF…PLCD), 53–86 (LCDQ…ELCD), 88–125 (DVRA…KDCQ), 127–168 (KDGP…NFCE), 170–206 (VANS…KTCS), and 208–245 (PVTN…LTCV). The Extracellular portion of the chain corresponds to 24–303 (AECFPACNPQ…KKTPLLTEGQ (280 aa)). Disulfide bonds link cysteine 26–cysteine 37, cysteine 30–cysteine 43, cysteine 45–cysteine 54, cysteine 57–cysteine 68, cysteine 63–cysteine 74, cysteine 76–cysteine 85, cysteine 92–cysteine 103, cysteine 97–cysteine 113, cysteine 115–cysteine 124, cysteine 131–cysteine 144, cysteine 138–cysteine 156, and cysteine 158–cysteine 167. Serine 94 is a glycosylation site (O-linked (GalNAc...) serine). N-linked (GlcNAc...) asparagine glycosylation is present at asparagine 100. The O-linked (GalNAc...) threonine glycan is linked to threonine 143. O-linked (GalNAc...) serine; partial glycosylation is present at serine 163. Asparagine 165 and asparagine 172 each carry an N-linked (GlcNAc...) asparagine; atypical; partial glycan. Disulfide bonds link cysteine 174–cysteine 185, cysteine 179–cysteine 194, cysteine 196–cysteine 205, cysteine 212–cysteine 223, cysteine 217–cysteine 233, and cysteine 235–cysteine 244. Serine 214 is a glycosylation site (O-linked (GalNAc...) serine). Threonine 222 is a glycosylation site (O-linked (GalNAc...) threonine; partial). Residue serine 251 is glycosylated (O-linked (GalNAc...) serine; partial). Threonine 256 carries O-linked (GalNAc...) threonine glycosylation. An O-linked (GalNAc...) serine; partial glycan is attached at serine 260. Residues 304–327 (AICFTILGVLTSLVVLGTVGIVFL) traverse the membrane as a helical segment. Over 328 to 383 (NKCETWVSNLRYNHMLRKKKNLLLQYNSGEDLAVNIIFPEKIDMTTFSKEAGDEEI) the chain is Cytoplasmic.

As to quaternary structure, monomer. Interacts with SH3RF2. Post-translationally, N- and O-glycosylated. O-glycosylated with core 1 or possibly core 8 glycans. Found within the stromal cells in close contact to the vascular structure of placental villi, yolk sac, fetal liver, adrenal cortex and pancreas and in the beta cells of the islets of Langerhans in the adult pancreas. Found also in some forms of neuroendocrine lung tumor tissue.

The protein resides in the membrane. Its subcellular location is the cytoplasm. Its function is as follows. May have a role in neuroendocrine differentiation. This is Protein delta homolog 1 (DLK1) from Homo sapiens (Human).